Reading from the N-terminus, the 355-residue chain is MRPIDIRPDKLAQEMLDYTSKLGQGMENLLNADAIDTGVSPKEAVYSEDKLVLYRYDTPAGVTPQKTPLLIVYALVNRPYMTDIQEDRSTIKGLLATGQDVYLIDWGYPDQADSALTLDDYINGYIDSCVDYLCETHEVDQVNILGICQGGAFSLMYASLHPDKVKNLVTMVTPVDFKTPGNLLSAWVQNVDIDLAVDTMGNIPGELLNWTFLSLKPFSLTGQKYVNMVDMLDDPDKVKNFLRMEKWIFDSPDQAGETFRQFTKDFYQKNGFINGGVKLGGKEIDLKNVDCPVLNIYALQDHLVPPDASKALNPWSAARTYTELAFPGGHIGIYVSGKAQKEVTPAIGKWLNERS.

The AB hydrolase-1 domain occupies 68–333 (PLLIVYALVN…LAFPGGHIGI (266 aa)). Cys-148 is an active-site residue.

The protein belongs to the PHA/PHB synthase family. Type III PhaC subfamily. Forms a heterodimer with PhaE, which may multimerize in the presence of 3-hydroxybutyryl-CoA.

It localises to the cytoplasm. It carries out the reaction (3R)-3-hydroxybutanoyl-CoA + [(3R)-hydroxybutanoate](n) = [(3R)-hydroxybutanoate](n+1) + CoA. It functions in the pathway biopolymer metabolism; poly-(R)-3-hydroxybutanoate biosynthesis. Its function is as follows. Polymerizes D(-)-3-hydroxybutyryl-CoA to create PHB which consists of thousands of hydroxybutyrate molecules linked end to end. PHB serves as an intracellular energy reserve material when cells grow under conditions of nutrient limitation. The protein is Poly(3-hydroxyalkanoate) polymerase subunit PhaC of Thiocystis violacea.